Reading from the N-terminus, the 144-residue chain is Large ribosomal subunit protein uL13 (144 aa).

Belongs to the universal ribosomal protein uL13 family. As to quaternary structure, part of the 50S ribosomal subunit.

Functionally, this protein is one of the early assembly proteins of the 50S ribosomal subunit, although it is not seen to bind rRNA by itself. It is important during the early stages of 50S assembly. The polypeptide is Large ribosomal subunit protein uL13 (Mesomycoplasma hyopneumoniae (strain 7448) (Mycoplasma hyopneumoniae)).